A 65-amino-acid chain; its full sequence is Large ribosomal subunit protein bL33c (65 aa).

Belongs to the bacterial ribosomal protein bL33 family.

Its subcellular location is the plastid. It localises to the chloroplast. This is Large ribosomal subunit protein bL33c from Chara vulgaris (Common stonewort).